The sequence spans 240 residues: Proteasome subunit alpha (240 aa).

This sequence belongs to the peptidase T1A family. As to quaternary structure, the 20S proteasome core is composed of 14 alpha and 14 beta subunits that assemble into four stacked heptameric rings, resulting in a barrel-shaped structure. The two inner rings, each composed of seven catalytic beta subunits, are sandwiched by two outer rings, each composed of seven alpha subunits. The catalytic chamber with the active sites is on the inside of the barrel. Has a gated structure, the ends of the cylinder being occluded by the N-termini of the alpha-subunits. Is capped by the proteasome-associated ATPase, ARC.

It localises to the cytoplasm. It participates in protein degradation; proteasomal Pup-dependent pathway. Its activity is regulated as follows. The formation of the proteasomal ATPase ARC-20S proteasome complex, likely via the docking of the C-termini of ARC into the intersubunit pockets in the alpha-rings, may trigger opening of the gate for substrate entry. Interconversion between the open-gate and close-gate conformations leads to a dynamic regulation of the 20S proteasome proteolysis activity. In terms of biological role, component of the proteasome core, a large protease complex with broad specificity involved in protein degradation. This is Proteasome subunit alpha from Frankia casuarinae (strain DSM 45818 / CECT 9043 / HFP020203 / CcI3).